Consider the following 98-residue polypeptide: Complement inhibitor RaCI2 (98 aa).

An N-terminal signal peptide occupies residues M1–S21. 3 disulfide bridges follow: C35/C59, C40/C61, and C55/C76.

It belongs to the RaCI family. Expressed in salivary glands.

The protein resides in the secreted. In terms of biological role, complement inhibitor. Prevents complement-mediated C5 activation by binding to C5. Binds C5 at a different binding site than the other tick complement inhibitors OmCI and CirpT1, and the drug eculizumab. This chain is Complement inhibitor RaCI2, found in Rhipicephalus microplus (Cattle tick).